We begin with the raw amino-acid sequence, 353 residues long: Ribosome biogenesis protein BRX1 homolog (353 aa).

The span at 1–10 (MAATKRKRRG) shows a compositional bias: basic residues. The interval 1 to 46 (MAATKRKRRGGFAVQAKKPKRNEKDAEPPAKRHATAEEVEEEERDR) is disordered. The span at 22-36 (NEKDAEPPAKRHATA) shows a compositional bias: basic and acidic residues. The 190-residue stretch at 60 to 249 (ERILIFSSRG…LIKIFQGSFG (190 aa)) folds into the Brix domain. A Glycyl lysine isopeptide (Lys-Gly) (interchain with G-Cter in SUMO2) cross-link involves residue lysine 160. Phosphoserine is present on serine 261. Lysine 276 carries the post-translational modification N6-acetyllysine. Residues lysine 314 and lysine 322 each participate in a glycyl lysine isopeptide (Lys-Gly) (interchain with G-Cter in SUMO2) cross-link.

It belongs to the BRX1 family.

It localises to the nucleus. The protein resides in the nucleolus. Required for biogenesis of the 60S ribosomal subunit. The protein is Ribosome biogenesis protein BRX1 homolog (BRIX1) of Pongo abelii (Sumatran orangutan).